A 527-amino-acid polypeptide reads, in one-letter code: Monooxygenase aurF (527 aa).

A signal peptide spans 1–19 (MPNPTVAIVGLGALGLVTL). Asn-59 carries N-linked (GlcNAc...) asparagine glycosylation.

Belongs to the FMO family. In terms of assembly, might be part of an extracellular enzyme complex composed of GIP1, aurF, aurO and aurS. It depends on FAD as a cofactor.

The protein resides in the secreted. The protein localises to the extracellular space. It functions in the pathway pigment biosynthesis. Its function is as follows. Monooxygenase; part of the gene cluster that mediates the biosynthesis of aurofusarin, a red mycelium pigment which is acting as a mycotoxin. The first step is performed by the polyketide synthase which condenses one acetyl-CoA and 6 malonyl-CoA units to form the first intermediate, the cyclic heptaketide and yellow pigment YWA1. The C2 hydroxyl group in the pyrone ring of YWA1 is probably formed during ring closure by an aldol-type cyclization reaction. The dehydratase aurZ then acts as the first tailoring enzyme in the aurofusarin biosynthetic pathway by converting YWA1 to nor-rubrofusarin. Nor-rubrofusarin is then methylated to rubrofusarin by the O-methyltransferase aurJ. Rubrofusarin is then transported across the plasma membrane by the rubrofusarin-specific pump aurT for further enzymatic processing by the extracellular complex composed of GIP1, aurF, aurO and aurS to yield aurofusarin. This Gibberella zeae (strain ATCC MYA-4620 / CBS 123657 / FGSC 9075 / NRRL 31084 / PH-1) (Wheat head blight fungus) protein is Monooxygenase aurF.